The primary structure comprises 228 residues: Cytidylate kinase (228 aa).

10–18 (GPSGSGKGT) lines the ATP pocket.

The protein belongs to the cytidylate kinase family. Type 1 subfamily.

The protein resides in the cytoplasm. It carries out the reaction CMP + ATP = CDP + ADP. It catalyses the reaction dCMP + ATP = dCDP + ADP. The polypeptide is Cytidylate kinase (Acinetobacter baumannii (strain SDF)).